Reading from the N-terminus, the 462-residue chain is WD repeat-containing protein WRAP73 (462 aa).

WD repeat units lie at residues 46–86 (TCLD…WHCK), 89–129 (EGSA…VSYI), 176–210 (TDTQDLTGIEWAPNGCVLAAWDTCLEYKVLLYSLD), and 221–260 (EWSLGIKSVAWSPSSQFLAIGSYDGKVRLLNHVTWKMITE). At S281 the chain carries Phosphoserine. WD repeat units lie at residues 328-369 (NPRM…LFVV) and 371-410 (EHMSPVRSFQWDPQQPRLAICTGGSKVYLWSPAGCVSVQV).

As to quaternary structure, interacts with SSX2IP. Ubiquitous.

The protein resides in the cytoplasm. The protein localises to the cytoskeleton. It localises to the microtubule organizing center. Its subcellular location is the centrosome. Functionally, the SSX2IP:WRAP73 complex is proposed to act as regulator of spindle anchoring at the mitotic centrosome. Required for the centrosomal localization of SSX2IP and normal mitotic bipolar spindle morphology. Required for the targeting of centriole satellite proteins to centrosomes such as of PCM1, SSX2IP, CEP290 and PIBF1/CEP90. Required for ciliogenesis and involved in the removal of the CEP97:CCP110 complex from the mother centriole. Involved in ciliary vesicle formation at the mother centriole and required for the docking of vesicles to the basal body during ciliogenesis; may promote docking of RAB8A- and ARL13B-containing vesicles. The sequence is that of WD repeat-containing protein WRAP73 (Wrap73) from Mus musculus (Mouse).